The sequence spans 517 residues: Crotonobetaine/carnitine--CoA ligase (517 aa).

Belongs to the ATP-dependent AMP-binding enzyme family.

The enzyme catalyses 4-(trimethylamino)butanoate + ATP + CoA = 4-(trimethylamino)butanoyl-CoA + AMP + diphosphate. It catalyses the reaction crotonobetaine + ATP + CoA = crotonobetainyl-CoA + AMP + diphosphate. The catalysed reaction is (R)-carnitine + ATP + CoA = (R)-carnitinyl-CoA + AMP + diphosphate. The protein operates within amine and polyamine metabolism; carnitine metabolism. In terms of biological role, catalyzes the transfer of CoA to carnitine, generating the initial carnitinyl-CoA needed for the CaiB reaction cycle. Also has activity toward crotonobetaine and gamma-butyrobetaine. This chain is Crotonobetaine/carnitine--CoA ligase, found in Escherichia coli (strain SE11).